Reading from the N-terminus, the 388-residue chain is Succinate--CoA ligase [ADP-forming] subunit beta (388 aa).

Positions 9-244 (KQLFAEYGLP…PSQDDPREAH (236 aa)) constitute an ATP-grasp domain. Residues Lys-46, 53–55 (GRG), Glu-99, Thr-102, and Glu-107 each bind ATP. Mg(2+)-binding residues include Asn-199 and Asp-213. Substrate-binding positions include Asn-264 and 321-323 (GIV).

This sequence belongs to the succinate/malate CoA ligase beta subunit family. In terms of assembly, heterotetramer of two alpha and two beta subunits. Mg(2+) serves as cofactor.

It carries out the reaction succinate + ATP + CoA = succinyl-CoA + ADP + phosphate. The catalysed reaction is GTP + succinate + CoA = succinyl-CoA + GDP + phosphate. The protein operates within carbohydrate metabolism; tricarboxylic acid cycle; succinate from succinyl-CoA (ligase route): step 1/1. Functionally, succinyl-CoA synthetase functions in the citric acid cycle (TCA), coupling the hydrolysis of succinyl-CoA to the synthesis of either ATP or GTP and thus represents the only step of substrate-level phosphorylation in the TCA. The beta subunit provides nucleotide specificity of the enzyme and binds the substrate succinate, while the binding sites for coenzyme A and phosphate are found in the alpha subunit. The sequence is that of Succinate--CoA ligase [ADP-forming] subunit beta from Pseudomonas fluorescens (strain Pf0-1).